The sequence spans 248 residues: Acetoacetyl-CoA reductase (248 aa).

NADP(+) contacts are provided by residues 14–16 (GGI), arginine 42, and 90–94 (NAGIT). Residues aspartate 96 and 149–152 (QFGQ) each bind substrate. Tyrosine 155 acts as the Proton acceptor in catalysis. An NADP(+)-binding site is contributed by 185–188 (PGYT). Substrate-binding positions include 186 to 187 (GY) and arginine 197.

The protein belongs to the short-chain dehydrogenases/reductases (SDR) family.

It is found in the cytoplasm. It carries out the reaction a (3R)-3-hydroxyacyl-CoA + NADP(+) = a 3-oxoacyl-CoA + NADPH + H(+). The protein operates within biopolymer metabolism; poly-(R)-3-hydroxybutanoate biosynthesis. In Acinetobacter sp. (strain RA3849), this protein is Acetoacetyl-CoA reductase (phaB).